Consider the following 370-residue polypeptide: Cytochrome b (370 aa).

Helical transmembrane passes span 25–45 (FGSMLLACSTLQVMTGFFLAV), 69–90 (WLMQNLHAIGASMFFICIYIHI), 105–125 (WLSGTTLLIMLMATAFFGYVL), and 170–190 (FFALHFILPFGIISLSSLHIM). Positions 75 and 89 each coordinate heme b. Positions 174 and 188 each coordinate heme b. Residue H193 coordinates a ubiquinone. 4 consecutive transmembrane segments (helical) span residues 218–238 (YKDLLMLTMMTTLLLMIVSFF), 280–300 (LGGALALTMSIMILLTVPFTH), 312–332 (FMQLMFWTFAATFLVITWTAT), and 339–358 (FTTISQVAALMYFMFFISNP).

This sequence belongs to the cytochrome b family. In terms of assembly, the cytochrome bc1 complex contains 3 respiratory subunits (MT-CYB, CYC1 and UQCRFS1), 2 core proteins (UQCRC1 and UQCRC2) and probably 6 low-molecular weight proteins. Requires heme b as cofactor.

The protein resides in the mitochondrion inner membrane. Component of the ubiquinol-cytochrome c reductase complex (complex III or cytochrome b-c1 complex) that is part of the mitochondrial respiratory chain. The b-c1 complex mediates electron transfer from ubiquinol to cytochrome c. Contributes to the generation of a proton gradient across the mitochondrial membrane that is then used for ATP synthesis. This Chilabothrus fordii (Ford's boa) protein is Cytochrome b (MT-CYB).